A 450-amino-acid polypeptide reads, in one-letter code: Glutathione reductase (450 aa).

Positions 14, 15, 34, 41, 42, and 50 each coordinate FAD. Position 14 (S14) interacts with glutathione. A disulfide bond links C42 and C47. Glutathione is bound at residue Y99. A115 is a binding site for FAD. 6 residues coordinate NADP(+): A175, I178, E181, R198, R204, and G262. An FAD-binding site is contributed by D303. E309 is a binding site for NADP(+). T311 contributes to the FAD binding site. R319 contributes to the glutathione binding site. V342 is a binding site for NADP(+). H439 contacts FAD. The Proton acceptor role is filled by H439.

This sequence belongs to the class-I pyridine nucleotide-disulfide oxidoreductase family. As to quaternary structure, homodimer. FAD is required as a cofactor.

Its subcellular location is the cytoplasm. It catalyses the reaction 2 glutathione + NADP(+) = glutathione disulfide + NADPH + H(+). In terms of biological role, catalyzes the reduction of glutathione disulfide (GSSG) to reduced glutathione (GSH). Constitutes the major mechanism to maintain a high GSH:GSSG ratio in the cytosol. This Escherichia coli (strain K12) protein is Glutathione reductase (gor).